A 314-amino-acid chain; its full sequence is Ribosomal RNA small subunit methyltransferase H (314 aa).

Residues 40–42 (GGH), Asp60, Phe85, Asp107, and Gln114 each bind S-adenosyl-L-methionine.

It belongs to the methyltransferase superfamily. RsmH family.

The protein resides in the cytoplasm. The enzyme catalyses cytidine(1402) in 16S rRNA + S-adenosyl-L-methionine = N(4)-methylcytidine(1402) in 16S rRNA + S-adenosyl-L-homocysteine + H(+). Specifically methylates the N4 position of cytidine in position 1402 (C1402) of 16S rRNA. This Hydrogenovibrio crunogenus (strain DSM 25203 / XCL-2) (Thiomicrospira crunogena) protein is Ribosomal RNA small subunit methyltransferase H.